The sequence spans 437 residues: GTPase Der (437 aa).

2 EngA-type G domains span residues 3-168 (PLIA…PETE) and 178-353 (IQLA…QNRS). Residues 9–16 (GRPNVGKS), 56–60 (DTGGY), 120–123 (NKVE), 184–191 (GRPNVGKS), 231–235 (DTAGL), and 296–299 (NKWD) each bind GTP. The 84-residue stretch at 354–437 (RKISTSVLNK…VPISMRFMQK (84 aa)) folds into the KH-like domain.

Belongs to the TRAFAC class TrmE-Era-EngA-EngB-Septin-like GTPase superfamily. EngA (Der) GTPase family. As to quaternary structure, associates with the 50S ribosomal subunit.

Functionally, GTPase that plays an essential role in the late steps of ribosome biogenesis. This Pelodictyon phaeoclathratiforme (strain DSM 5477 / BU-1) protein is GTPase Der.